We begin with the raw amino-acid sequence, 329 residues long: Mas-related G-protein coupled receptor member X2 (329 aa).

The Extracellular segment spans residues 1-33; the sequence is MDPTTPAWGTESTTMNGNDQALPLLCGKETMIS. The helical transmembrane segment at 34-54 threads the bilayer; sequence VFLILFIALVGLVGNAFVLWL. The Cytoplasmic segment spans residues 55–63; that stretch reads LGFRMRRNA. A helical membrane pass occupies residues 64–84; the sequence is FSVYVLSLAGADFLFLCFQMT. Topologically, residues 85 to 96 are extracellular; sequence SCLAYLINFFGS. The chain crosses the membrane as a helical span at residues 97–116; that stretch reads ISINIPSFFTVMTCAYLAGL. Over 117-143 the chain is Cytoplasmic; it reads SMLSAISTERCLSVLWPIWYRCRRPRH. A helical membrane pass occupies residues 144 to 164; it reads LSAVMCVLLWALSLLLSILEG. The Extracellular segment spans residues 165 to 183; it reads KFCGFLFSDDDPGWCQTFD. Residues 184 to 204 form a helical membrane-spanning segment; it reads FITAAWLMFLFVVLCGSSLAL. The Cytoplasmic segment spans residues 205-227; sequence LVRILCGSRSLPLTRLYLTILLT. A helical membrane pass occupies residues 228-248; the sequence is VLIFLLCGLPFGIQWFLILWI. Residues 249–263 lie on the Extracellular side of the membrane; the sequence is WKNSVVLFCHIHPIS. The chain crosses the membrane as a helical span at residues 264 to 284; sequence VVLSSFNSSANPIIYFFVGSF. At 285–329 the chain is on the cytoplasmic side; that stretch reads RKQWRLRQPILKLALQRALQDTAEVDHSEGCFSQGTLEMSRSSLV.

This sequence belongs to the G-protein coupled receptor 1 family. Mas subfamily.

The protein resides in the cell membrane. Mast cell-specific receptor for basic secretagogues, i.e. cationic amphiphilic drugs, as well as endo- or exogenous peptides, consisting of a basic head group and a hydrophobic core. Recognizes and binds small molecules containing a cyclized tetrahydroisoquinoline (THIQ), such as non-steroidal neuromuscular blocking drugs (NMBDs), including tubocurarine and atracurium. In response to these compounds, mediates pseudo-allergic reactions characterized by histamine release, inflammation and airway contraction. The chain is Mas-related G-protein coupled receptor member X2 (MRGPRX2) from Macaca mulatta (Rhesus macaque).